The following is a 144-amino-acid chain: uncharacterized protein (144 aa).

Residues 72–90 form a helical membrane-spanning segment; the sequence is VAIGTSLIVGAGVAMEVSV.

To yeast YCL21w.

It is found in the membrane. This is an uncharacterized protein from Saccharomyces cerevisiae (strain ATCC 204508 / S288c) (Baker's yeast).